Consider the following 543-residue polypeptide: CTP synthase (543 aa).

Positions 1-265 (MARYIFITGG…DEEVLAAFGI (265 aa)) are amidoligase domain. Residue Ser13 coordinates CTP. UTP is bound at residue Ser13. Residue 14–19 (SLGKGL) coordinates ATP. Position 54 (Tyr54) interacts with L-glutamine. Asp71 is an ATP binding site. Positions 71 and 139 each coordinate Mg(2+). CTP is bound by residues 146-148 (DIE), 186-191 (KTKPTQ), and Lys222. Residues 186 to 191 (KTKPTQ) and Lys222 each bind UTP. 238-240 (RDA) contacts ATP. The region spanning 291 to 542 (TIAIVGKYTG…IEAAMAQSRL (252 aa)) is the Glutamine amidotransferase type-1 domain. Position 353 (Gly353) interacts with L-glutamine. The Nucleophile; for glutamine hydrolysis role is filled by Cys380. L-glutamine-binding positions include 381–384 (FGMQ), Glu404, and Arg470. Catalysis depends on residues His515 and Glu517.

This sequence belongs to the CTP synthase family. Homotetramer.

The catalysed reaction is UTP + L-glutamine + ATP + H2O = CTP + L-glutamate + ADP + phosphate + 2 H(+). The enzyme catalyses L-glutamine + H2O = L-glutamate + NH4(+). It catalyses the reaction UTP + NH4(+) + ATP = CTP + ADP + phosphate + 2 H(+). It participates in pyrimidine metabolism; CTP biosynthesis via de novo pathway; CTP from UDP: step 2/2. Its activity is regulated as follows. Allosterically activated by GTP, when glutamine is the substrate; GTP has no effect on the reaction when ammonia is the substrate. The allosteric effector GTP functions by stabilizing the protein conformation that binds the tetrahedral intermediate(s) formed during glutamine hydrolysis. Inhibited by the product CTP, via allosteric rather than competitive inhibition. Its function is as follows. Catalyzes the ATP-dependent amination of UTP to CTP with either L-glutamine or ammonia as the source of nitrogen. Regulates intracellular CTP levels through interactions with the four ribonucleotide triphosphates. The chain is CTP synthase from Rhodopseudomonas palustris (strain BisA53).